A 558-amino-acid chain; its full sequence is Putative ABC transporter ATP-binding protein SMU_1934c (558 aa).

ABC transporter domains lie at 5-246 (IEFK…GIRE) and 295-527 (FDIQ…ANLK). Residues 39–46 (GPSGSGKS) and 328–335 (GKNGAGKS) contribute to the ATP site.

This sequence belongs to the ABC transporter superfamily.

It localises to the cell membrane. In terms of biological role, probably part of an ABC transporter complex. Responsible for energy coupling to the transport system. This is Putative ABC transporter ATP-binding protein SMU_1934c (sdcBA) from Streptococcus mutans serotype c (strain ATCC 700610 / UA159).